The following is a 49-amino-acid chain: Sperm protamine P1 (49 aa).

It belongs to the protamine P1 family. In terms of tissue distribution, testis.

The protein localises to the nucleus. It localises to the chromosome. Protamines substitute for histones in the chromatin of sperm during the haploid phase of spermatogenesis. They compact sperm DNA into a highly condensed, stable and inactive complex. This chain is Sperm protamine P1 (PRM1), found in Pteropus hypomelanus (Island flying fox).